Here is a 98-residue protein sequence, read N- to C-terminus: NADH-ubiquinone oxidoreductase chain 4L (98 aa).

Helical transmembrane passes span 1–21 (MSLVYMNIMTAFMVALAGLLM), 29–49 (SLLCLEGMMLSLFVMASLTIL), and 59–79 (MPIILLVFAACEAALGLSLLV).

The protein belongs to the complex I subunit 4L family. Core subunit of respiratory chain NADH dehydrogenase (Complex I) which is composed of 45 different subunits.

Its subcellular location is the mitochondrion inner membrane. The enzyme catalyses a ubiquinone + NADH + 5 H(+)(in) = a ubiquinol + NAD(+) + 4 H(+)(out). Functionally, core subunit of the mitochondrial membrane respiratory chain NADH dehydrogenase (Complex I) which catalyzes electron transfer from NADH through the respiratory chain, using ubiquinone as an electron acceptor. Part of the enzyme membrane arm which is embedded in the lipid bilayer and involved in proton translocation. This is NADH-ubiquinone oxidoreductase chain 4L (MT-ND4L) from Cervus elaphus (Red deer).